The following is a 527-amino-acid chain: AAA ATPase forming ring-shaped complexes (527 aa).

Low complexity predominate over residues 1–18 (MVTMSSPTDSSPSNSFSD). The tract at residues 1-38 (MVTMSSPTDSSPSNSFSDFNREEQSRLSDEVRQLKRTN) is disordered. Residues 19-33 (FNREEQSRLSDEVRQ) are compositionally biased toward basic and acidic residues. Residues 21 to 53 (REEQSRLSDEVRQLKRTNSDLGARNAKLAEMLK) adopt a coiled-coil conformation. Position 257-262 (257-262 (GCGKTL)) interacts with ATP. Residues 492-515 (DENQQSEDLPNTSNPDEWSRITGR) are disordered. Residues 497–507 (SEDLPNTSNPD) show a composition bias toward polar residues.

It belongs to the AAA ATPase family. In terms of assembly, homohexamer. Assembles into a hexameric ring structure.

This Corynebacterium glutamicum (strain R) protein is AAA ATPase forming ring-shaped complexes.